A 160-amino-acid chain; its full sequence is MTTRVIYPGTFDPITNGHLDLIERAAAMFDTVIVGVAYNPTKKPLFDLNERVALAQSVTQHLPNVEIVGFSGLLVNFAKEHNANVLVRGLRAVSDFEYEFQLANMNRRLMPELETVFLTPAEENSFISSTIVKEVALHKGDVSQFVPNQISQALNKKLFA.

Threonine 10 lines the substrate pocket. ATP-binding positions include 10 to 11 (TF) and histidine 18. Residues lysine 42, leucine 74, and arginine 88 each contribute to the substrate site. ATP contacts are provided by residues 89 to 91 (GLR), glutamate 99, and 124 to 130 (NSFISST).

This sequence belongs to the bacterial CoaD family. Homohexamer. Mg(2+) is required as a cofactor.

It is found in the cytoplasm. It catalyses the reaction (R)-4'-phosphopantetheine + ATP + H(+) = 3'-dephospho-CoA + diphosphate. It functions in the pathway cofactor biosynthesis; coenzyme A biosynthesis; CoA from (R)-pantothenate: step 4/5. Functionally, reversibly transfers an adenylyl group from ATP to 4'-phosphopantetheine, yielding dephospho-CoA (dPCoA) and pyrophosphate. In Photobacterium damsela subsp. piscicida (Pasteurella piscicida), this protein is Phosphopantetheine adenylyltransferase.